The primary structure comprises 319 residues: ATP-dependent 6-phosphofructokinase (319 aa).

Glycine 11 is a binding site for ATP. 21 to 25 (RAVVR) is an ADP binding site. ATP contacts are provided by residues 72-73 (RC) and 102-105 (GEGS). Glutamate 103 lines the Mg(2+) pocket. Substrate is bound at residue 126 to 128 (TID). The Proton acceptor role is filled by aspartate 128. Residue lysine 155 participates in ADP binding. Residues arginine 163 and 170-172 (MGR) contribute to the substrate site. ADP is bound by residues 186-188 (GAE), arginine 212, and 214-216 (KIN). Substrate is bound by residues glutamate 223, arginine 244, and 250–253 (HVQR).

It belongs to the phosphofructokinase type A (PFKA) family. ATP-dependent PFK group I subfamily. Prokaryotic clade 'B1' sub-subfamily. In terms of assembly, homotetramer. Requires Mg(2+) as cofactor.

Its subcellular location is the cytoplasm. The catalysed reaction is beta-D-fructose 6-phosphate + ATP = beta-D-fructose 1,6-bisphosphate + ADP + H(+). It participates in carbohydrate degradation; glycolysis; D-glyceraldehyde 3-phosphate and glycerone phosphate from D-glucose: step 3/4. With respect to regulation, allosterically activated by ADP and other diphosphonucleosides, and allosterically inhibited by phosphoenolpyruvate. Functionally, catalyzes the phosphorylation of D-fructose 6-phosphate to fructose 1,6-bisphosphate by ATP, the first committing step of glycolysis. This chain is ATP-dependent 6-phosphofructokinase, found in Thermotoga petrophila (strain ATCC BAA-488 / DSM 13995 / JCM 10881 / RKU-1).